The primary structure comprises 125 residues: Large ribosomal subunit protein bL12 (125 aa).

This sequence belongs to the bacterial ribosomal protein bL12 family. As to quaternary structure, homodimer. Part of the ribosomal stalk of the 50S ribosomal subunit. Forms a multimeric L10(L12)X complex, where L10 forms an elongated spine to which 2 to 4 L12 dimers bind in a sequential fashion. Binds GTP-bound translation factors.

Functionally, forms part of the ribosomal stalk which helps the ribosome interact with GTP-bound translation factors. Is thus essential for accurate translation. The polypeptide is Large ribosomal subunit protein bL12 (Rickettsia africae (strain ESF-5)).